A 159-amino-acid polypeptide reads, in one-letter code: Protein-export protein SecB (159 aa).

This sequence belongs to the SecB family. As to quaternary structure, homotetramer, a dimer of dimers. One homotetramer interacts with 1 SecA dimer.

It is found in the cytoplasm. Its function is as follows. One of the proteins required for the normal export of preproteins out of the cell cytoplasm. It is a molecular chaperone that binds to a subset of precursor proteins, maintaining them in a translocation-competent state. It also specifically binds to its receptor SecA. The sequence is that of Protein-export protein SecB from Marinomonas sp. (strain MWYL1).